The following is a 613-amino-acid chain: Dihydroxy-acid dehydratase (613 aa).

Residue Asp-81 participates in Mg(2+) binding. Cys-122 provides a ligand contact to [2Fe-2S] cluster. Mg(2+) contacts are provided by Asp-123 and Lys-124. The residue at position 124 (Lys-124) is an N6-carboxylysine. Cys-193 is a binding site for [2Fe-2S] cluster. Glu-489 serves as a coordination point for Mg(2+). The Proton acceptor role is filled by Ser-515.

This sequence belongs to the IlvD/Edd family. In terms of assembly, homodimer. [2Fe-2S] cluster is required as a cofactor. Requires Mg(2+) as cofactor.

It carries out the reaction (2R)-2,3-dihydroxy-3-methylbutanoate = 3-methyl-2-oxobutanoate + H2O. The enzyme catalyses (2R,3R)-2,3-dihydroxy-3-methylpentanoate = (S)-3-methyl-2-oxopentanoate + H2O. It participates in amino-acid biosynthesis; L-isoleucine biosynthesis; L-isoleucine from 2-oxobutanoate: step 3/4. The protein operates within amino-acid biosynthesis; L-valine biosynthesis; L-valine from pyruvate: step 3/4. Its function is as follows. Functions in the biosynthesis of branched-chain amino acids. Catalyzes the dehydration of (2R,3R)-2,3-dihydroxy-3-methylpentanoate (2,3-dihydroxy-3-methylvalerate) into 2-oxo-3-methylpentanoate (2-oxo-3-methylvalerate) and of (2R)-2,3-dihydroxy-3-methylbutanoate (2,3-dihydroxyisovalerate) into 2-oxo-3-methylbutanoate (2-oxoisovalerate), the penultimate precursor to L-isoleucine and L-valine, respectively. This Pseudomonas putida (strain W619) protein is Dihydroxy-acid dehydratase.